Here is a 571-residue protein sequence, read N- to C-terminus: UvrABC system protein C (571 aa).

The 79-residue stretch at 15-93 folds into the GIY-YIG domain; the sequence is TSPGVYLWKD…VDRFNPEFNI (79 aa). The UVR domain maps to 184–219; sequence NNYLNELTNKMHTAANNMQFELALFLRDGLTYLKKL.

This sequence belongs to the UvrC family. Interacts with UvrB in an incision complex.

The protein localises to the cytoplasm. In terms of biological role, the UvrABC repair system catalyzes the recognition and processing of DNA lesions. UvrC both incises the 5' and 3' sides of the lesion. The N-terminal half is responsible for the 3' incision and the C-terminal half is responsible for the 5' incision. This Mycoplasmopsis agalactiae (strain NCTC 10123 / CIP 59.7 / PG2) (Mycoplasma agalactiae) protein is UvrABC system protein C.